A 73-amino-acid polypeptide reads, in one-letter code: U-scoloptoxin(15)-Sm3a (73 aa).

An N-terminal signal peptide occupies residues 1 to 23; sequence MERKVFLLLFVIVLLTLPGFMSA.

The protein belongs to the scoloptoxin-15 family. Contains 2 disulfide bonds. As to expression, expressed by the venom gland.

It localises to the secreted. In Scolopendra morsitans (Tanzanian blue ringleg centipede), this protein is U-scoloptoxin(15)-Sm3a.